The primary structure comprises 1171 residues: DExH-box ATP-dependent RNA helicase DExH15 chloroplastic (1171 aa).

Residues 1-58 (MNTLPVVSLTASSSFKFFHFPSLHRSLSHSPNFSFTKSLILNPNHLSFKSTLNSLSPS) constitute a chloroplast transit peptide. Residues 53 to 62 (NSLSPSQSQL) show a composition bias toward polar residues. Residues 53-111 (NSLSPSQSQLYEEEDDEEEEEEDEDDDDEAADEYDNISDEIRNSDDDDDDEETEFSVDL) form a disordered region. Acidic residues-rich tracts occupy residues 63-90 (YEEEDDEEEEEEDEDDDDEAADEYDNIS) and 97-107 (DDDDDDEETEF). In terms of domain architecture, Helicase ATP-binding spans 163–327 (IEAFLRGSSV…WIGEIHGKTE (165 aa)). 176–183 (APTSSGKT) serves as a coordination point for ATP. A DEVH box motif is present at residues 275–278 (DEVH). One can recognise a Helicase C-terminal domain in the interval 424–620 (QISDTLWHLQ…ASYGMVLNLV (197 aa)).

Belongs to the DExH box helicase family.

The protein resides in the plastid. The protein localises to the chloroplast. It localises to the cytoplasmic granule. The catalysed reaction is ATP + H2O = ADP + phosphate + H(+). In terms of biological role, RNA helicase involved in group II intron splicing. Essential protein required during embryogenesis. Involved in post-transcriptional gene silencing. Modulates the determination of cell fate. Necessary for normal plasmodesmata (PD) development and aperture regulation. The chain is DExH-box ATP-dependent RNA helicase DExH15 chloroplastic (ISE2) from Arabidopsis thaliana (Mouse-ear cress).